A 485-amino-acid chain; its full sequence is Glutamyl-tRNA(Gln) amidotransferase subunit A (485 aa).

Active-site charge relay system residues include Lys-78 and Ser-153. The active-site Acyl-ester intermediate is the Ser-177.

This sequence belongs to the amidase family. GatA subfamily. As to quaternary structure, heterotrimer of A, B and C subunits.

The enzyme catalyses L-glutamyl-tRNA(Gln) + L-glutamine + ATP + H2O = L-glutaminyl-tRNA(Gln) + L-glutamate + ADP + phosphate + H(+). In terms of biological role, allows the formation of correctly charged Gln-tRNA(Gln) through the transamidation of misacylated Glu-tRNA(Gln) in organisms which lack glutaminyl-tRNA synthetase. The reaction takes place in the presence of glutamine and ATP through an activated gamma-phospho-Glu-tRNA(Gln). The protein is Glutamyl-tRNA(Gln) amidotransferase subunit A of Bacillus cereus (strain ATCC 10987 / NRS 248).